The primary structure comprises 464 residues: MRLSKALIDMDMADYTEALDPAYTTLEFENMQVLSIGTDTSTSDVTSLSASNSIGINSLCAICGDRATGKHYGASSCDGCKGFFRRSVRKNHMYSCRFSRQCVVDKDKRNQCRYCRLKKCFRAGMKKEAVQNERDRISTRRSSYEDSSLPSINVLIQAEVLSQQITSSVGVLNTDIRGKKIACIIDVCDSMKQQLLVLVEWAKYIPAFCELPLDDQVALLRAHAGEHLLLGATKRSMMFKDILLLGNDRLIPRNCPELEVGRVAVRILDELVLPFQELQIDDNEYACLKAIIFFDPDAKGLSDPTKIKRMRYQVQVSLEDYINDRQYDSRGRFGELLLLLPTLQSITWQMIEQIQFVKLFGMAKIDNLLQEMLLGGSANEASHTHHHLHPHLVQDHLATNVIVANNTLPSQLHNGQMSTPETPQPSPPAGSGAEQYKIVHGTIASINKQPTSIPQSTITKQEAM.

Residues 57 to 132 (NSLCAICGDR…AGMKKEAVQN (76 aa)) constitute a DNA-binding region (nuclear receptor). NR C4-type zinc fingers lie at residues 60–80 (CAICGDRATGKHYGASSCDGC) and 96–120 (CRFSRQCVVDKDKRNQCRYCRLKKC). Residues 147–376 (SSLPSINVLI…NLLQEMLLGG (230 aa)) enclose the NR LBD domain. The 9aaTAD motif lies at 367–375 (NLLQEMLLG). A compositionally biased stretch (polar residues) spans 410–421 (SQLHNGQMSTPE). The segment at 410 to 433 (SQLHNGQMSTPETPQPSPPAGSGA) is disordered.

The protein belongs to the nuclear hormone receptor family. NR2 subfamily. As to quaternary structure, homodimerization is required for HNF4-alpha to bind to its recognition site. Expressed in liver and kidney.

The protein resides in the nucleus. Transcriptional regulator; binds and activates the promoter for the HNF1-alpha gene. Potential initiator of a transcriptional cascade within a subset of cells committed to a specific developmental program. Could be a determinant for asymmetry in early development. May play a role in the regulation of the circadian clock. This chain is Hepatocyte nuclear factor 4-alpha (hnf4a), found in Xenopus laevis (African clawed frog).